The chain runs to 337 residues: Casein kinase I isoform alpha (337 aa).

Residue Ala2 is modified to N-acetylalanine. Phosphoserine is present on Ser4. Lys8 carries the N6-acetyllysine modification. In terms of domain architecture, Protein kinase spans 17 to 285 (YKLVRKIGSG…YLRQLFRILF (269 aa)). ATP-binding positions include 23-31 (IGSGSFGDI) and Lys46. The Proton acceptor role is filled by Asp136. The segment covering 309 to 325 (AASSSGQGQQAQTPTGK) has biased composition (low complexity). The tract at residues 309-337 (AASSSGQGQQAQTPTGKQTDKTKSNMKGF) is disordered.

It belongs to the protein kinase superfamily. CK1 Ser/Thr protein kinase family. Casein kinase I subfamily. As to quaternary structure, interacts with the Axin complex. Interacts with TUT1, leading to TUT1 phosphorylation. Interacts with FAM83A, FAM83B, FAM83C, FAM83D, FAM83E, FAM83F, FAM83G and FAM83H (via DUF1669). Interaction with FAM83H recruits CSNK1A1 to keratin filaments. Phosphorylated by MTOR in response to mitogenic stimulation, leading to its activation.

It is found in the cytoplasm. Its subcellular location is the cytoskeleton. The protein resides in the microtubule organizing center. The protein localises to the centrosome. It localises to the chromosome. It is found in the centromere. Its subcellular location is the kinetochore. The protein resides in the nucleus speckle. The protein localises to the cilium basal body. It localises to the spindle. It carries out the reaction L-seryl-[protein] + ATP = O-phospho-L-seryl-[protein] + ADP + H(+). The catalysed reaction is L-threonyl-[protein] + ATP = O-phospho-L-threonyl-[protein] + ADP + H(+). In terms of biological role, casein kinases are operationally defined by their preferential utilization of acidic proteins such as caseins as substrates. Can phosphorylate a large number of proteins. Participates in Wnt signaling. Phosphorylates CTNNB1 at 'Ser-45'. May phosphorylate PER1 and PER2. May play a role in segregating chromosomes during mitosis. May play a role in keratin cytoskeleton disassembly and thereby, it may regulate epithelial cell migration. Acts as a positive regulator of mTORC1 and mTORC2 signaling in response to nutrients by mediating phosphorylation of DEPTOR inhibitor. Acts as an inhibitor of NLRP3 inflammasome assembly by mediating phosphorylation of NLRP3. The sequence is that of Casein kinase I isoform alpha (Csnk1a1) from Mus musculus (Mouse).